We begin with the raw amino-acid sequence, 634 residues long: MSDSFYRYDVIVIGGGHAGTEAALAAARAGARTLLLTHNIETVGAMSCNPAIGGIGKGHLVKEIDALGGAMAKAADLAGIQWRTLNASKGPAVRATRCQADRNLYRSAIRRIVEAQPNLTVFQAAVDDLIIHNGAAEGDSVRGVITQTGLRFEATAVVLTAGTFLAGKIHVGETQYAAGRMGDPPATTLAARLRERPFAIDRLKTGTPPRIDGRTLDYTMMDEQPGDDPLPVMSFMGQVSDHPTQVSCWITHTTEQTHDIIRGALHRSPLYSGQIEGIGPRYCPSIEDKVVRFADKTSHQIFVEPEGLDVTEIYPNGISTSLPFDVQLALVRSIRGFAQAHITRPGYAIEYDFFDPRGLKASLETKAVGGLFFAGQINGTTGYEEAAAQGLLAGLNAARQAQALPAWSPRRDEAYLGVLVDDLITHGTTEPYRMFTSRAEYRLQLREDNADLRLTGVGRAMGLVDDARWARFSSKQEAVQRETARLSALWATPGNALGREVVDTLGVPMSRETNVLDLIKRPELSYAALMRVPTLGPGVDDAQVAEQVEIGVKYAGYLNRQRDEIARQQRHETTPIPEGFDYAGVRGLSMEVQQKLERVRPQSIGQAQRIPGMTPAAISLLLVHLERARRSQVA.

14–19 is an FAD binding site; sequence GGGHAG. 279–293 contributes to the NAD(+) binding site; sequence GPRYCPSIEDKVVRF.

The protein belongs to the MnmG family. Homodimer. Heterotetramer of two MnmE and two MnmG subunits. FAD is required as a cofactor.

Its subcellular location is the cytoplasm. NAD-binding protein involved in the addition of a carboxymethylaminomethyl (cmnm) group at the wobble position (U34) of certain tRNAs, forming tRNA-cmnm(5)s(2)U34. This chain is tRNA uridine 5-carboxymethylaminomethyl modification enzyme MnmG, found in Xanthomonas campestris pv. campestris (strain 8004).